We begin with the raw amino-acid sequence, 163 residues long: Small ribosomal subunit protein eS10A (163 aa).

A disordered region spans residues Leu-92–Asn-163. Gly residues predominate over residues Gly-105 to Gly-116.

It belongs to the eukaryotic ribosomal protein eS10 family.

It is found in the cytoplasm. The protein is Small ribosomal subunit protein eS10A (RpS10a) of Drosophila melanogaster (Fruit fly).